Reading from the N-terminus, the 249-residue chain is Small ribosomal subunit protein uS3 (249 aa).

The region spanning 39–109 (IRTYVLARLK…EVKIDVVEVV (71 aa)) is the KH type-2 domain. Basic and acidic residues predominate over residues 226 to 239 (KERRNDAGARNRDS). The disordered stretch occupies residues 226 to 249 (KERRNDAGARNRDSRTKRRHRTKR). Residues 240–249 (RTKRRHRTKR) are compositionally biased toward basic residues.

It belongs to the universal ribosomal protein uS3 family. As to quaternary structure, part of the 30S ribosomal subunit. Forms a tight complex with proteins S10 and S14.

In terms of biological role, binds the lower part of the 30S subunit head. Binds mRNA in the 70S ribosome, positioning it for translation. In Pelodictyon phaeoclathratiforme (strain DSM 5477 / BU-1), this protein is Small ribosomal subunit protein uS3.